Consider the following 272-residue polypeptide: Small ribosomal subunit protein uS2 (272 aa).

The tract at residues 238 to 272 is disordered; sequence ASKEEQTEEAEEETLSSKYREQDFQEAKSGARGEK. Over residues 255 to 272 the composition is skewed to basic and acidic residues; the sequence is KYREQDFQEAKSGARGEK.

Belongs to the universal ribosomal protein uS2 family.

This Protochlamydia amoebophila (strain UWE25) protein is Small ribosomal subunit protein uS2.